Consider the following 477-residue polypeptide: ATP synthase subunit beta (477 aa).

163 to 170 (GGAGVGKT) contributes to the ATP binding site.

Belongs to the ATPase alpha/beta chains family. F-type ATPases have 2 components, CF(1) - the catalytic core - and CF(0) - the membrane proton channel. CF(1) has five subunits: alpha(3), beta(3), gamma(1), delta(1), epsilon(1). CF(0) has four main subunits: a(1), b(1), b'(1) and c(9-12).

It localises to the cellular thylakoid membrane. The catalysed reaction is ATP + H2O + 4 H(+)(in) = ADP + phosphate + 5 H(+)(out). Produces ATP from ADP in the presence of a proton gradient across the membrane. The catalytic sites are hosted primarily by the beta subunits. The sequence is that of ATP synthase subunit beta from Synechococcus sp. (strain JA-3-3Ab) (Cyanobacteria bacterium Yellowstone A-Prime).